The sequence spans 307 residues: ATP synthase gamma chain (307 aa).

This sequence belongs to the ATPase gamma chain family. As to quaternary structure, F-type ATPases have 2 components, CF(1) - the catalytic core - and CF(0) - the membrane proton channel. CF(1) has five subunits: alpha(3), beta(3), gamma(1), delta(1), epsilon(1). CF(0) has three main subunits: a, b and c.

Its subcellular location is the cell membrane. Its function is as follows. Produces ATP from ADP in the presence of a proton gradient across the membrane. The gamma chain is believed to be important in regulating ATPase activity and the flow of protons through the CF(0) complex. The chain is ATP synthase gamma chain from Bifidobacterium longum (strain DJO10A).